The sequence spans 1237 residues: Anion exchange protein 2 (1237 aa).

Positions 1-237 (MSSAPRRPAS…SYNLQERRRI (237 aa)) are disordered. Residues 1–704 (MSSAPRRPAS…DFRDALDPQC (704 aa)) are Cytoplasmic-facing. Composition is skewed to basic and acidic residues over residues 37–49 (ELHR…RFEE) and 58–75 (GGEE…EYHR). 2 stretches are compositionally biased toward basic residues: residues 76–85 (QSSHHIHHPL) and 94–110 (RRRK…RRRP). A phosphoserine mark is found at Ser-113, Ser-132, Ser-144, Ser-170, and Ser-172. The span at 120–133 (TIEEGEEDEDEASE) shows a compositional bias: acidic residues. The span at 137 to 151 (ARAPTQPSPASTPSS) shows a compositional bias: low complexity. Gly residues predominate over residues 205–215 (GTAGGDDGGAS). A Phosphoserine modification is found at Ser-239. Residue Thr-253 is modified to Phosphothreonine. N6-methyllysine is present on Lys-270. The segment at 286–316 (RKNAKGSVQSGREGREPGPTPRARPRAPHKP) is disordered. Ser-439 is subject to Phosphoserine. The disordered stretch occupies residues 445-466 (SLLGHHHGQGAESDPHVTEPLI). The tract at residues 704–1237 (CLAAVIFIYF…DEYNEMPMPV (534 aa)) is membrane (anion exchange). Transmembrane regions (helical) follow at residues 705 to 725 (LAAV…FGGL), 750 to 770 (FCLL…LLVF), 792 to 812 (IGFW…SFLV), and 822 to 842 (IFAF…LVKI). The Extracellular portion of the chain corresponds to 843-893 (FQEHPLHGCSVSNSSEADSGDNATWAGTRVTLGLGNGSSAGPAGQGRPRGQ). Asn-855, Asn-864, and Asn-878 each carry an N-linked (GlcNAc...) asparagine glycan. A helical membrane pass occupies residues 894-914 (PNTALLSLVLMAGTFFIAFFL). Over 915–929 (RKFKNGRFFPGRVRR) the chain is Cytoplasmic. 5 helical membrane passes run 930–950 (VIGD…DYSI), 985–1005 (FPVW…ILIF), 1032–1052 (LLLI…WLAA), 1086–1106 (RVTG…GDLL), and 1109–1129 (IPLA…LNGI). Cys-1169 carries S-palmitoyl cysteine lipidation. Residues 1170–1190 (LALLWAVMSTAASLAFPFILI) traverse the membrane as a helical segment.

Belongs to the anion exchanger (TC 2.A.31) family.

The protein resides in the apical cell membrane. The protein localises to the basolateral cell membrane. It catalyses the reaction hydrogencarbonate(in) + chloride(out) = hydrogencarbonate(out) + chloride(in). In terms of biological role, sodium-independent anion exchanger which mediates the electroneutral exchange of chloride for bicarbonate ions across the cell membrane. Plays an important role in osteoclast differentiation and function. Regulates bone resorption and calpain-dependent actin cytoskeleton organization in osteoclasts via anion exchange-dependent control of pH. Essential for intracellular pH regulation in CD8(+) T-cells upon CD3 stimulation, modulating CD8(+) T-cell response. The chain is Anion exchange protein 2 (SLC4A2) from Equus caballus (Horse).